Here is a 546-residue protein sequence, read N- to C-terminus: Probable acyl-activating enzyme 21 (546 aa).

The protein belongs to the ATP-dependent AMP-binding enzyme family.

Its function is as follows. May act as an acid--thiol ligase that activates carboxylic acids by forming acyl-CoAs. This is Probable acyl-activating enzyme 21 (AEE21) from Arabidopsis thaliana (Mouse-ear cress).